Consider the following 437-residue polypeptide: Glutamate-1-semialdehyde 2,1-aminomutase (437 aa).

Lysine 277 carries the post-translational modification N6-(pyridoxal phosphate)lysine.

This sequence belongs to the class-III pyridoxal-phosphate-dependent aminotransferase family. HemL subfamily. Homodimer. Pyridoxal 5'-phosphate is required as a cofactor.

The protein localises to the cytoplasm. The catalysed reaction is (S)-4-amino-5-oxopentanoate = 5-aminolevulinate. It functions in the pathway porphyrin-containing compound metabolism; protoporphyrin-IX biosynthesis; 5-aminolevulinate from L-glutamyl-tRNA(Glu): step 2/2. The protein operates within porphyrin-containing compound metabolism; chlorophyll biosynthesis. The chain is Glutamate-1-semialdehyde 2,1-aminomutase from Thermosynechococcus vestitus (strain NIES-2133 / IAM M-273 / BP-1).